The chain runs to 230 residues: Sugar fermentation stimulation protein homolog (230 aa).

Belongs to the SfsA family.

The protein is Sugar fermentation stimulation protein homolog of Clostridium kluyveri (strain NBRC 12016).